The following is a 236-amino-acid chain: Orotidine 5'-phosphate decarboxylase (236 aa).

Substrate-binding positions include Asp-16, Lys-38, 65 to 74 (DLKLHDIGNT), Thr-123, Arg-184, Gln-193, Gly-213, and Arg-214. Lys-67 serves as the catalytic Proton donor.

It belongs to the OMP decarboxylase family. Type 1 subfamily. As to quaternary structure, homodimer.

It carries out the reaction orotidine 5'-phosphate + H(+) = UMP + CO2. It functions in the pathway pyrimidine metabolism; UMP biosynthesis via de novo pathway; UMP from orotate: step 2/2. Catalyzes the decarboxylation of orotidine 5'-monophosphate (OMP) to uridine 5'-monophosphate (UMP). The chain is Orotidine 5'-phosphate decarboxylase from Methylobacterium sp. (strain 4-46).